The sequence spans 241 residues: MSPPVSVTKMQVENYAFAPTVNPAGSTNTLFLAGAGHRGLEIEGKFVKFTAIGVYLEESAIPFLAEKWKGKTPQELTDSVEFFRDVVTGPFEKFTRVTTILPLTGKQYSEKVAENCVAHWKGIGTYTDDEGRAIEKFLDVFRSETFPPGASIMFTQSPLGLLTISFAKDDSVTGTANAVIENKQLSEAVLESIIGKHGVSPAAKCNVAERVAELLKKSYAEEASVFGKPETEKSTIPVIGV.

Thr-50, Asn-115, and Ser-192 together coordinate substrate.

The protein belongs to the chalcone isomerase family.

It catalyses the reaction a chalcone = a flavanone.. It functions in the pathway secondary metabolite biosynthesis; flavonoid biosynthesis. Functionally, catalyzes the intramolecular cyclization of bicyclic chalcones into tricyclic (S)-flavanones. Responsible for the isomerization of 4,2',4',6'-tetrahydroxychalcone (also termed chalcone) into naringenin. This Petunia hybrida (Petunia) protein is Chalcone--flavanone isomerase C (CHI3).